The chain runs to 207 residues: Outer-membrane lipoprotein LolB (207 aa).

The signal sequence occupies residues 1-21 (MPLPDFRFIRLLPLAALVLTA). The N-palmitoyl cysteine moiety is linked to residue Cys-22. A lipid anchor (S-diacylglycerol cysteine) is attached at Cys-22.

It belongs to the LolB family. As to quaternary structure, monomer.

It is found in the cell outer membrane. Its function is as follows. Plays a critical role in the incorporation of lipoproteins in the outer membrane after they are released by the LolA protein. The sequence is that of Outer-membrane lipoprotein LolB from Escherichia coli O6:H1 (strain CFT073 / ATCC 700928 / UPEC).